The primary structure comprises 283 residues: Movement protein (283 aa).

This sequence belongs to the tenuiviruses pc4 protein family.

Transports viral genome to neighboring plant cells directly through plasmosdesmata, without any budding. The movement protein allows efficient cell to cell propagation, by bypassing the host cell wall barrier. The sequence is that of Movement protein from Maize stripe virus (MStV).